The primary structure comprises 290 residues: uncharacterized protein (290 aa).

A run of 5 helical transmembrane segments spans residues 14–34, 82–102, 115–135, 158–174, and 176–196; these read ALLN…IGIL, ISSL…LIGG, NLIA…IYLY, DAFV…SSQL, and LPWV…KTAW.

Belongs to the cation diffusion facilitator (CDF) transporter (TC 2.A.4) family.

The protein localises to the cell membrane. This is an uncharacterized protein from Bacillus subtilis (strain 168).